Consider the following 156-residue polypeptide: Small ribosomal subunit protein uS7 (156 aa).

Belongs to the universal ribosomal protein uS7 family. As to quaternary structure, part of the 30S ribosomal subunit. Contacts proteins S9 and S11.

Functionally, one of the primary rRNA binding proteins, it binds directly to 16S rRNA where it nucleates assembly of the head domain of the 30S subunit. Is located at the subunit interface close to the decoding center, probably blocks exit of the E-site tRNA. This Streptomyces coelicolor (strain ATCC BAA-471 / A3(2) / M145) protein is Small ribosomal subunit protein uS7 (rspG).